Reading from the N-terminus, the 307-residue chain is Mediator of RNA polymerase II transcription subunit 18 (307 aa).

A compositionally biased stretch (polar residues) spans 117-126 (TNFNSTNEDQ). Residues 117-162 (TNFNSTNEDQNNSKHTEDTVNESRNSDDIIDVDMDASPAPSNESCS) are disordered.

Belongs to the Mediator complex subunit 18 family. In terms of assembly, component of the Mediator complex, which is composed of at least 21 subunits that form three structurally distinct submodules. The Mediator head module contains MED6, MED8, MED11, SRB4/MED17, SRB5/MED18, ROX3/MED19, SRB2/MED20 and SRB6/MED22, the middle module contains MED1, MED4, NUT1/MED5, MED7, CSE2/MED9, NUT2/MED10, SRB7/MED21 and SOH1/MED31, and the tail module contains MED2, PGD1/MED3, RGR1/MED14, GAL11/MED15 and SIN4/MED16. The head and the middle modules interact directly with RNA polymerase II, whereas the elongated tail module interacts with gene-specific regulatory proteins. SRB5/MED18 interacts directly with MED8 and SRB2/MED20.

The protein resides in the nucleus. In terms of biological role, component of the Mediator complex, a coactivator involved in the regulated transcription of nearly all RNA polymerase II-dependent genes. Mediator functions as a bridge to convey information from gene-specific regulatory proteins to the basal RNA polymerase II transcription machinery. The Mediator complex, having a compact conformation in its free form, is recruited to promoters by direct interactions with regulatory proteins and serves for the assembly of a functional preinitiation complex with RNA polymerase II and the general transcription factors. The Mediator complex unfolds to an extended conformation and partially surrounds RNA polymerase II, specifically interacting with the unphosphorylated form of the C-terminal domain (CTD) of RNA polymerase II. The Mediator complex dissociates from the RNA polymerase II holoenzyme and stays at the promoter when transcriptional elongation begins. The sequence is that of Mediator of RNA polymerase II transcription subunit 18 (SRB5) from Saccharomyces cerevisiae (strain ATCC 204508 / S288c) (Baker's yeast).